A 211-amino-acid polypeptide reads, in one-letter code: Protein DEHYDRATION-INDUCED 19 homolog 7 (211 aa).

Threonine 113 carries the post-translational modification Phosphothreonine. Residues 163-194 (GDSVAQVSPKDTSKSKIQQESFSNEDQEKAKK) are disordered. Residues 167–186 (AQVSPKDTSKSKIQQESFSN) show a composition bias toward polar residues.

Belongs to the Di19 family. In terms of processing, not phosphorylated in vitro by CPK3 or CPK11. Expressed in seedlings, roots, leaves, stems, flowers and siliques.

It is found in the nucleus. In terms of biological role, involved in both red and blue light signaling. This chain is Protein DEHYDRATION-INDUCED 19 homolog 7 (DI19-7), found in Arabidopsis thaliana (Mouse-ear cress).